Reading from the N-terminus, the 251-residue chain is Pantothenate synthetase (251 aa).

28-35 (MGALHTGH) provides a ligand contact to ATP. The active-site Proton donor is H35. Q59 lines the (R)-pantoate pocket. Residue Q59 participates in beta-alanine binding. ATP is bound at residue 145–148 (GEKD). A (R)-pantoate-binding site is contributed by Q151. ATP contacts are provided by residues V174 and 182 to 185 (KSSR).

It belongs to the pantothenate synthetase family. Homodimer.

It localises to the cytoplasm. The catalysed reaction is (R)-pantoate + beta-alanine + ATP = (R)-pantothenate + AMP + diphosphate + H(+). It participates in cofactor biosynthesis; (R)-pantothenate biosynthesis; (R)-pantothenate from (R)-pantoate and beta-alanine: step 1/1. In terms of biological role, catalyzes the condensation of pantoate with beta-alanine in an ATP-dependent reaction via a pantoyl-adenylate intermediate. The polypeptide is Pantothenate synthetase (Bdellovibrio bacteriovorus (strain ATCC 15356 / DSM 50701 / NCIMB 9529 / HD100)).